The following is a 321-amino-acid chain: Glycerol-3-phosphate dehydrogenase [NAD(P)+] (321 aa).

Positions 14, 15, 35, and 109 each coordinate NADPH. 2 residues coordinate sn-glycerol 3-phosphate: lysine 109 and glycine 137. Residue alanine 141 participates in NADPH binding. Residues lysine 192, aspartate 252, serine 262, arginine 263, and asparagine 264 each contribute to the sn-glycerol 3-phosphate site. Residue lysine 192 is the Proton acceptor of the active site. Arginine 263 is a binding site for NADPH. NADPH is bound by residues leucine 287 and glutamate 289.

Belongs to the NAD-dependent glycerol-3-phosphate dehydrogenase family.

The protein localises to the cytoplasm. The enzyme catalyses sn-glycerol 3-phosphate + NAD(+) = dihydroxyacetone phosphate + NADH + H(+). The catalysed reaction is sn-glycerol 3-phosphate + NADP(+) = dihydroxyacetone phosphate + NADPH + H(+). It functions in the pathway membrane lipid metabolism; glycerophospholipid metabolism. In terms of biological role, catalyzes the reduction of the glycolytic intermediate dihydroxyacetone phosphate (DHAP) to sn-glycerol 3-phosphate (G3P), the key precursor for phospholipid synthesis. In Rickettsia felis (strain ATCC VR-1525 / URRWXCal2) (Rickettsia azadi), this protein is Glycerol-3-phosphate dehydrogenase [NAD(P)+].